The sequence spans 164 residues: DNA-directed RNA polymerase 19 kDa subunit (164 aa).

Residues 1-35 (MADTDDIIDYESDDLTEYEDDEEEEEDGESLETSD) show a composition bias toward acidic residues. Positions 1–39 (MADTDDIIDYESDDLTEYEDDEEEEEDGESLETSDIDPK) are disordered.

Belongs to the poxviridae DNA-directed RNA polymerase 19 kDa subunit family. As to quaternary structure, the DNA-dependent RNA polymerase used for intermediate and late genes expression consists of eight subunits Rpo30/OPG66, Rpo7/OPG90, Rpo22/OPG103, Rpo147/OPG105, Rpo18/OPG119, Rpo19/OPG131, Rpo132/OPG151 and Rpo35/OPG156. The same holoenzyme, with the addition of the transcription-specificity factor OPG109, is used for early gene expression.

The protein localises to the virion. The catalysed reaction is RNA(n) + a ribonucleoside 5'-triphosphate = RNA(n+1) + diphosphate. In terms of biological role, part of the DNA-dependent RNA polymerase which catalyzes the transcription of viral DNA into RNA using the four ribonucleoside triphosphates as substrates. Responsible for the transcription of early, intermediate and late genes. DNA-dependent RNA polymerase associates with the early transcription factor (ETF), itself composed of OPG118 and OPG133, thereby allowing the early genes transcription. Late transcription, and probably also intermediate transcription, require newly synthesized RNA polymerase. In Homo sapiens (Human), this protein is DNA-directed RNA polymerase 19 kDa subunit (OPG131).